Reading from the N-terminus, the 361-residue chain is MKGLILVGGYGTRLRPLTLTVPKPLVEFGNRPMILHQIEALAAAGVTDIVLAVNYRPEVMVETLKKYEDEFGVSITFSVETEPLGTAGPLKLAESVLKKDNSPFFVLNSDVICDYPFKELADFHQAHGGKGTIVATKVDEPSKYGVIVHDIATPNLIDRFVEKPVEFVGNRINAGLYILNPEVIDLIDLKPTSIEKETFPILVEQKSLYSFDLEGYWMDVGQPKDFLSGTVLYLNSLSKRDPAKLAKGENIVGNVLVDPTAKISPTAKVGPDVVIGPNVVIGDGVRITRSVALSNSHIKDHALVKSTIIGWNSTVGKWARLEGVTVLGDDVEVKDEIYINGGKVLPHKSISVNVPKEAIIM.

The protein belongs to the transferase hexapeptide repeat family.

Its subcellular location is the cytoplasm. It carries out the reaction alpha-D-mannose 1-phosphate + GTP + H(+) = GDP-alpha-D-mannose + diphosphate. The protein operates within nucleotide-sugar biosynthesis; GDP-alpha-D-mannose biosynthesis; GDP-alpha-D-mannose from alpha-D-mannose 1-phosphate (GTP route): step 1/1. In terms of biological role, involved in cell wall synthesis where it is required for glycosylation. Involved in cell cycle progression through cell-size checkpoint. The polypeptide is Mannose-1-phosphate guanyltransferase (MPG1) (Kluyveromyces lactis (strain ATCC 8585 / CBS 2359 / DSM 70799 / NBRC 1267 / NRRL Y-1140 / WM37) (Yeast)).